The primary structure comprises 152 residues: D-aminoacyl-tRNA deacylase (152 aa).

The Gly-cisPro motif, important for rejection of L-amino acids signature appears at 142 to 143 (GP).

The protein belongs to the DTD family. In terms of assembly, homodimer.

The protein resides in the cytoplasm. The catalysed reaction is glycyl-tRNA(Ala) + H2O = tRNA(Ala) + glycine + H(+). The enzyme catalyses a D-aminoacyl-tRNA + H2O = a tRNA + a D-alpha-amino acid + H(+). An aminoacyl-tRNA editing enzyme that deacylates mischarged D-aminoacyl-tRNAs. Also deacylates mischarged glycyl-tRNA(Ala), protecting cells against glycine mischarging by AlaRS. Acts via tRNA-based rather than protein-based catalysis; rejects L-amino acids rather than detecting D-amino acids in the active site. By recycling D-aminoacyl-tRNA to D-amino acids and free tRNA molecules, this enzyme counteracts the toxicity associated with the formation of D-aminoacyl-tRNA entities in vivo and helps enforce protein L-homochirality. This Burkholderia lata (strain ATCC 17760 / DSM 23089 / LMG 22485 / NCIMB 9086 / R18194 / 383) protein is D-aminoacyl-tRNA deacylase.